We begin with the raw amino-acid sequence, 138 residues long: Large ribosomal subunit protein uL16 (138 aa).

Basic residues predominate over residues 1–13 (MLQPARRKYRKEQ). The disordered stretch occupies residues 1–22 (MLQPARRKYRKEQKGRNTGVAT).

The protein belongs to the universal ribosomal protein uL16 family. Part of the 50S ribosomal subunit.

In terms of biological role, binds 23S rRNA and is also seen to make contacts with the A and possibly P site tRNAs. The chain is Large ribosomal subunit protein uL16 from Paracidovorax citrulli (strain AAC00-1) (Acidovorax citrulli).